Consider the following 911-residue polypeptide: Protein translocase subunit SecA (911 aa).

ATP is bound by residues Gln-86, 104-108 (GEGKT), and Asp-494. Residues 856 to 911 (VEGIDAPQRPAQLRFTGPSEDGQSAVTRSGTDSGATVAAGTNRRSRRQAERRGRRG) form a disordered region. A compositionally biased stretch (polar residues) spans 876-889 (DGQSAVTRSGTDSG). The segment covering 902 to 911 (RQAERRGRRG) has biased composition (basic and acidic residues).

It belongs to the SecA family. As to quaternary structure, monomer and homodimer. Part of the essential Sec protein translocation apparatus which comprises SecA, SecYEG and auxiliary proteins SecDF. Other proteins may also be involved.

Its subcellular location is the cell membrane. The protein resides in the cytoplasm. The enzyme catalyses ATP + H2O + cellular proteinSide 1 = ADP + phosphate + cellular proteinSide 2.. In terms of biological role, part of the Sec protein translocase complex. Interacts with the SecYEG preprotein conducting channel. Has a central role in coupling the hydrolysis of ATP to the transfer of proteins into and across the cell membrane, serving as an ATP-driven molecular motor driving the stepwise translocation of polypeptide chains across the membrane. This chain is Protein translocase subunit SecA, found in Micrococcus luteus (strain ATCC 4698 / DSM 20030 / JCM 1464 / CCM 169 / CCUG 5858 / IAM 1056 / NBRC 3333 / NCIMB 9278 / NCTC 2665 / VKM Ac-2230) (Micrococcus lysodeikticus).